Here is a 458-residue protein sequence, read N- to C-terminus: DNA repair protein RadA (458 aa).

The segment at 10 to 27 adopts a C4-type zinc-finger fold; the sequence is CQSCGYESPKWMGKCPGC. 98-105 lines the ATP pocket; sequence GDPGIGKS. The RadA KNRFG motif motif lies at 255 to 259; it reads KNRFG. Positions 354–458 are lon-protease-like; that stretch reads DAYLKVAGGV…AEALRTSLGG (105 aa).

The protein belongs to the RecA family. RadA subfamily. As to quaternary structure, interacts with DisA.

DNA-dependent ATPase involved in processing of recombination intermediates, plays a role in repairing DNA breaks. Stimulates the branch migration of RecA-mediated strand transfer reactions, allowing the 3' invading strand to extend heteroduplex DNA faster. Binds ssDNA in the presence of ADP but not other nucleotides, has ATPase activity that is stimulated by ssDNA and various branched DNA structures, but inhibited by SSB. Does not have RecA's homology-searching function. Its function is as follows. Plays a role in DNA repair. Might stabilize or process Holliday junction intermediates. May work with DisA following methyl methanesulfonate (MMS) but not H(2)O(2) damage; DisA is a DNA integrity scanning protein with c-di-AMP synthase activity. The protein is DNA repair protein RadA of Bacillus subtilis (strain 168).